The sequence spans 173 residues: Alpha-crystallin A chain (173 aa).

Methionine 1 carries the N-acetylmethionine modification. The segment at 1–63 (MDIAIQHPWF…RTVLDSGISE (63 aa)) is required for complex formation with BFSP1 and BFSP2. The residue at position 6 (glutamine 6) is a Deamidated glutamine; partial. Serine 45 bears the Phosphoserine mark. Glutamine 50 is subject to Deamidated glutamine; partial. Residues 52–162 (LFRTVLDSGI…GHSERAIPVS (111 aa)) enclose the sHSP domain. Position 70 is an N6-acetyllysine (lysine 70). Residue glutamine 90 is modified to Deamidated glutamine; partial. An N6-acetyllysine modification is found at lysine 99. Histidine 100 is a binding site for Zn(2+). Asparagine 101 is subject to Deamidated asparagine; partial. Residues glutamate 102 and histidine 107 each contribute to the Zn(2+) site. Serine 122 is subject to Phosphoserine. Asparagine 123 is subject to Deamidated asparagine; partial. A disordered region spans residues 144–173 (PKVPSGMDAGHSERAIPVSREEKPSSAPSS). Over residues 153–167 (GHSERAIPVSREEKP) the composition is skewed to basic and acidic residues. Zn(2+) is bound at residue histidine 154. O-linked (GlcNAc) serine glycosylation occurs at serine 162.

It belongs to the small heat shock protein (HSP20) family. As to quaternary structure, heteromer composed of three CRYAA and one CRYAB subunits. Inter-subunit bridging via zinc ions enhances stability, which is crucial as there is no protein turn over in the lens. Can also form homodimers and homotetramers (dimers of dimers) which serve as the building blocks of homooligomers. Within homooligomers, the zinc-binding motif is created from residues of 3 different molecules. His-100 and Glu-102 from one molecule are ligands of the zinc ion, and His-107 and His-154 residues from additional molecules complete the site with tetrahedral coordination geometry. Part of a complex required for lens intermediate filament formation composed of BFSP1, BFSP2 and CRYAA. In terms of processing, acetylation at Lys-70 may increase chaperone activity. Post-translationally, undergoes age-dependent proteolytical cleavage at the C-terminus.

Its subcellular location is the cytoplasm. The protein localises to the nucleus. Functionally, contributes to the transparency and refractive index of the lens. Acts as a chaperone, preventing aggregation of various proteins under a wide range of stress conditions. Required for the correct formation of lens intermediate filaments as part of a complex composed of BFSP1, BFSP2 and CRYAA. The sequence is that of Alpha-crystallin A chain (CRYAA) from Balaenoptera acutorostrata (Common minke whale).